We begin with the raw amino-acid sequence, 240 residues long: tRNA pseudouridine synthase B (240 aa).

Catalysis depends on Asp-54, which acts as the Nucleophile.

The protein belongs to the pseudouridine synthase TruB family. Type 1 subfamily.

It carries out the reaction uridine(55) in tRNA = pseudouridine(55) in tRNA. Responsible for synthesis of pseudouridine from uracil-55 in the psi GC loop of transfer RNAs. This Chlorobaculum tepidum (strain ATCC 49652 / DSM 12025 / NBRC 103806 / TLS) (Chlorobium tepidum) protein is tRNA pseudouridine synthase B.